We begin with the raw amino-acid sequence, 327 residues long: Annexin A8 (327 aa).

4 Annexin repeats span residues 21–92 (FNPD…ALMY), 93–164 (PPYR…CLLQ), 177–249 (GLAL…TVVK), and 253–324 (NLHS…SLVG). Residues Met266, Gly268, Gly270, and Asp310 each coordinate Ca(2+).

The protein belongs to the annexin family.

Its function is as follows. This protein is an anticoagulant protein that acts as an indirect inhibitor of the thromboplastin-specific complex, which is involved in the blood coagulation cascade. The sequence is that of Annexin A8 from Homo sapiens (Human).